A 348-amino-acid chain; its full sequence is MFKMVSSPHTHSSNLTAKFMLWVMVAMLPALGMQAYFFGYGVFIQVFIALLLAVAIEIAIAKLRRKPTAFYVADLSGVLTALILAISIPPYAPYWIIVIGIIVALLLAKHSYGGLGQNLFNPAMVAYALLLVSFPVQMTGWLVPIDLLNEPPTFGDAISLVFSGVTSDGFSVHQLLGSVDGIAQATPLDSAKTSMQKLGVEGVLQSPIFSGLFANGWWQINLAFLAGGLLLIYKRIIHWQIPAAMLGMFALLSGLTDLLLPHTHLNVVSQLFSGAMMFGAFFIATDPVTASITPRGKLIFGGLIGLFVYLIRYYGNYPDAVAFSVLLANICVPLIDHYTQPRLYGSGR.

Helical transmembrane passes span 15 to 35, 36 to 56, 67 to 87, 88 to 108, and 125 to 145; these read LTAK…GMQA, YFFG…AVAI, PTAF…LAIS, IPPY…LLLA, and VAYA…LVPI. An FMN phosphoryl threonine modification is found at threonine 186. The next 5 helical transmembrane spans lie at 212-232, 241-261, 265-285, 298-318, and 320-340; these read LFAN…LLLI, IPAA…LLLP, LNVV…FIAT, LIFG…GNYP, and AVAF…HYTQ.

Belongs to the NqrB/RnfD family. As to quaternary structure, the complex is composed of six subunits: RnfA, RnfB, RnfC, RnfD, RnfE and RnfG. FMN is required as a cofactor.

The protein localises to the cell inner membrane. Part of a membrane-bound complex that couples electron transfer with translocation of ions across the membrane. In Actinobacillus pleuropneumoniae serotype 5b (strain L20), this protein is Ion-translocating oxidoreductase complex subunit D.